Here is a 430-residue protein sequence, read N- to C-terminus: ATP-dependent RNA helicase RhlB (430 aa).

A Q motif motif is present at residues 9–37; the sequence is QKFSDFALHPQVIEALESKGFHYCTPIQA. A Helicase ATP-binding domain is found at 40-219; sequence LPLTLSGRDV…FEQMNNAEYV (180 aa). 53–60 is a binding site for ATP; the sequence is AQTGTGKT. The DEAD box motif lies at 165–168; sequence DEAD. Residues 245–390 form the Helicase C-terminal domain; sequence RLLQTLLEEE…LSKYNSDALM (146 aa). Residues 392–430 form a disordered region; that stretch reads DLPAPKRLTRPPRSNNGPRRHNSAPRRSGAPRNNRKRAD.

This sequence belongs to the DEAD box helicase family. RhlB subfamily. Component of the RNA degradosome, which is a multiprotein complex involved in RNA processing and mRNA degradation.

The protein localises to the cytoplasm. The catalysed reaction is ATP + H2O = ADP + phosphate + H(+). DEAD-box RNA helicase involved in RNA degradation. Has RNA-dependent ATPase activity and unwinds double-stranded RNA. This Pectobacterium atrosepticum (strain SCRI 1043 / ATCC BAA-672) (Erwinia carotovora subsp. atroseptica) protein is ATP-dependent RNA helicase RhlB.